Consider the following 117-residue polypeptide: Large ribosomal subunit protein bL17 (117 aa).

The protein belongs to the bacterial ribosomal protein bL17 family. In terms of assembly, part of the 50S ribosomal subunit. Contacts protein L32.

This chain is Large ribosomal subunit protein bL17, found in Dehalococcoides mccartyi (strain ATCC BAA-2100 / JCM 16839 / KCTC 5957 / BAV1).